Here is a 1811-residue protein sequence, read N- to C-terminus: Protein virilizer homolog (1811 aa).

Ala2 is subject to N-acetylalanine. A disordered region spans residues 132–302 (ISHDRDSPPP…EGDDGYEQIS (171 aa)). 2 positions are modified to phosphoserine: Ser133 and Ser138. A compositionally biased stretch (pro residues) spans 139–152 (PPPPPPPPPPPQPQ). Positions 160 to 169 (KHADGEKEDQ) are enriched in basic and acidic residues. Ser173 bears the Phosphoserine mark. Residues 174-190 (PPRPQPRGPRTPPGPPP) show a composition bias toward pro residues. Position 184 is a phosphothreonine (Thr184). A Phosphoserine modification is found at Ser222. Over residues 224 to 233 (DRNSVPQEGQ) the composition is skewed to polar residues. Acidic residues-rich tracts occupy residues 234-267 (YSDEGEVEEEPQEEGEDDEDDVDVEEEEDEDEDD) and 274-302 (IPDDEEEDEEEEGEEDEEGEGDDGYEQIS). Tyr913 carries the phosphotyrosine modification. At Ser1578 the chain carries Phosphoserine. Disordered regions lie at residues 1615 to 1634 (HVVPPPRGRGRGGFGQGIRP) and 1662 to 1811 (KEVV…SFTR). Residues 1688–1697 (GFSGNRGGRG) show a composition bias toward gly residues. Thr1707 bears the Phosphothreonine mark. At Arg1722 the chain carries Omega-N-methylarginine. Positions 1722–1747 (RGSSWSAQNTPRGNYNESRGGQSNFN) are enriched in polar residues. Asymmetric dimethylarginine; alternate is present on Arg1740. At Arg1740 the chain carries Omega-N-methylarginine; alternate. An asymmetric dimethylarginine mark is found at Arg1772, Arg1774, and Arg1792. A compositionally biased stretch (gly residues) spans 1787–1801 (GSGGSRGKFVSGGSG). A compositionally biased stretch (basic residues) spans 1802–1811 (RGRHVRSFTR).

This sequence belongs to the vir family. In terms of assembly, component of the WMM complex, a N6-methyltransferase complex composed of a catalytic subcomplex, named MAC, and of an associated subcomplex, named MACOM. The MAC subcomplex is composed of METTL3 and METTL14. The MACOM subcomplex is composed of WTAP, ZC3H13, CBLL1/HAKAI, VIRMA, and, in some cases of RBM15 (RBM15 or RBM15B). Interacts with WTAP. Also a component of a MACOM-like complex, named WTAP complex, composed of WTAP, ZC3H13, CBLL1, VIRMA, RBM15, BCLAF1 and THRAP3. Interacts with NUDT21 and CPSF6.

The protein localises to the nucleus speckle. It is found in the nucleus. The protein resides in the nucleoplasm. Its subcellular location is the cytoplasm. Associated component of the WMM complex, a complex that mediates N6-methyladenosine (m6A) methylation of RNAs, a modification that plays a role in the efficiency of mRNA splicing and RNA processing. Acts as a key regulator of m6A methylation by promoting m6A methylation of mRNAs in the 3'-UTR near the stop codon: recruits the catalytic core components METTL3 and METTL14, thereby guiding m6A methylation at specific sites. Required for mRNA polyadenylation via its role in selective m6A methylation: m6A methylation of mRNAs in the 3'-UTR near the stop codon correlating with alternative polyadenylation (APA). This chain is Protein virilizer homolog, found in Mus musculus (Mouse).